The primary structure comprises 562 residues: Tissue-type plasminogen activator (562 aa).

Residues 1 to 20 (MNAMKRGLCCVLLLCGAVFA) form the signal peptide. Positions 21–32 (LPSQEIHARVRR) are excised as a propeptide. Residues 33 to 35 (GAR) constitute a propeptide, removed by plasmin. The Fibronectin type-I domain occupies 39 to 81 (VICRDEKTQMIYQQHQSWLRPVLRSNRVEYCWCNSGRAQCHSV). 17 disulfide bridges follow: Cys41–Cys71, Cys69–Cys78, Cys86–Cys97, Cys91–Cys108, Cys110–Cys119, Cys127–Cys208, Cys148–Cys190, Cys179–Cys203, Cys215–Cys296, Cys236–Cys278, Cys267–Cys291, Cys299–Cys430, Cys342–Cys358, Cys350–Cys419, Cys444–Cys519, Cys476–Cys492, and Cys509–Cys537. An important for binding to annexin A2 region spans residues 42-52 (RDEKTQMIYQQ). Residues 82–120 (PVRSCSEPRCFNGGTCQQALYFSDFVCQCPEGFAGKCCE) enclose the EGF-like domain. O-linked (Fuc) threonine glycosylation is present at Thr96. Kringle domains are found at residues 126-208 (TCYE…TPAC) and 214-296 (DCYF…VPSC). A glycan (N-linked (GlcNAc...) asparagine) is linked at Asn152. One can recognise a Peptidase S1 domain in the interval 311–561 (IKGGLFADIA…YLDWIHDNMR (251 aa)). Active-site charge relay system residues include His357 and Asp406. Asn483 carries an N-linked (GlcNAc...) asparagine glycan. Ser513 (charge relay system) is an active-site residue.

It belongs to the peptidase S1 family. As to quaternary structure, heterodimer of chain A and chain B held by a disulfide bond. Binds to fibrin with high affinity. This interaction leads to an increase in the catalytic efficiency of the enzyme due to an increase in affinity for plasminogen. Similarly, binding to heparin increases the activation of plasminogen. Binds to annexin A2, cytokeratin-8, fibronectin and laminin. Binds to mannose receptor and the low-density lipoprotein receptor-related protein (LRP1); these proteins are involved in TPA clearance. Binds LRP1B; binding is followed by internalization and degradation. Forms heterodimer with SERPINA5. Interacts with SERPINE1. In complex with SERPINE1, interacts with SORL1. Post-translationally, the single chain, almost fully active enzyme, can be further processed into a two-chain fully active form by a cleavage after Arg-310 catalyzed by plasmin, tissue kallikrein or factor Xa.

The protein resides in the secreted. Its subcellular location is the extracellular space. It catalyses the reaction Specific cleavage of Arg-|-Val bond in plasminogen to form plasmin.. Inhibited by SERPINA5. Inhibited by SERPINE1. Its function is as follows. Converts the abundant, but inactive, zymogen plasminogen to plasmin by hydrolyzing a single Arg-Val bond in plasminogen. By controlling plasmin-mediated proteolysis, it plays an important role in tissue remodeling and degradation, in cell migration and many other physiopathological events. During oocyte activation, plays a role in cortical granule reaction in the zona reaction, which contributes to the block to polyspermy. This Pongo abelii (Sumatran orangutan) protein is Tissue-type plasminogen activator (PLAT).